Consider the following 354-residue polypeptide: Malate dehydrogenase 1, peroxisomal (354 aa).

Residues 6 to 14 (RIARISAHL) form a peroxisomal targeting signal PTS2 region. NAD(+) is bound by residues 49-55 (GAAGGIG) and aspartate 75. Residues arginine 122 and arginine 128 each coordinate substrate. NAD(+) is bound by residues asparagine 135 and 158–160 (ISN). Asparagine 160 and arginine 194 together coordinate substrate. The active-site Proton acceptor is histidine 218. An NAD(+)-binding site is contributed by methionine 269.

Belongs to the LDH/MDH superfamily. MDH type 1 family. Homodimer. As to expression, expressed in rosette leaves at low levels.

The protein localises to the peroxisome. The enzyme catalyses (S)-malate + NAD(+) = oxaloacetate + NADH + H(+). Its function is as follows. Catalyzes a reversible NAD-dependent dehydrogenase reaction involved in central metabolism and redox homeostasis between organelle compartments. Peroxisomal NAD-dependent malate dehydrogenase involved in fatty acid beta-oxidation. Reoxidizes NADH from the beta-oxidation and provides NAD for the conversion of fatty acyl-CoA to acetyl-CoA. Does not participate directly in the glyoxylate cycle. Required for maintenance of photosynthetic rates under photorespiratory conditions, and carbon flow during photorespiration. Supplies NADH reductant to the peroxisomal hydroxypyruvate reductase (HPR), which reduces hydroxypyruvate into glycerate in the photorespiratory cycle. In Arabidopsis thaliana (Mouse-ear cress), this protein is Malate dehydrogenase 1, peroxisomal.